The chain runs to 771 residues: Post-GPI attachment to proteins factor 6 (771 aa).

The N-terminal stretch at 1-34 (MGRAGTGTGGEAVAAVVAGPLLLLLLARPPPASA) is a signal peptide. The Extracellular segment spans residues 35 to 545 (GYSGKSEVGL…STAQTVAQQR (511 aa)). Residue N144 is glycosylated (N-linked (GlcNAc...) asparagine). The disordered stretch occupies residues 322 to 343 (FNASSGLLSPSPDHQDLGRSGR). Residues 334 to 343 (DHQDLGRSGR) show a composition bias toward basic and acidic residues. Residues N407 and N431 are each glycosylated (N-linked (GlcNAc...) asparagine). One can recognise an EGF-like domain in the interval 497–533 (PCLNDCGPYGQCLLLRRHSYLYASCSCKAGWRGWSCT). Intrachain disulfides connect C498-C508, C502-C521, and C523-C532. Residues 546 to 566 (AATLLLTLSNLMFLAPIAVSV) form a helical membrane-spanning segment. Residues 567–568 (RR) lie on the Cytoplasmic side of the membrane. The helical transmembrane segment at 569–589 (FFLVEASVYAYTMFFSTFYHA) threads the bilayer. The Extracellular portion of the chain corresponds to 590–605 (CDQPGEAVLCILSYDT). The chain crosses the membrane as a helical span at residues 606 to 626 (LQYCDFLGSGAAIWVTILCMA). The Cytoplasmic segment spans residues 627–629 (RLK). A helical transmembrane segment spans residues 630 to 650 (TVLKYVLFLLGTLVIAMSLQL). Residues 651–653 (DRR) are Extracellular-facing. Residues 654 to 674 (GMWNMLGPCLFAFVIMASMWA) traverse the membrane as a helical segment. Residues 675–690 (YRCGHRRQCYPTSWQR) lie on the Cytoplasmic side of the membrane. A helical membrane pass occupies residues 691 to 711 (WAFYLLPGVSMASVGIAIYTS). Residues 712–717 (MMTSDN) are Extracellular-facing. Residues 718 to 738 (YYYTHSIWHILLAGSAALLLP) traverse the membrane as a helical segment. Residues 739 to 771 (PPDQPAEPWACSQKFPCHYQICKNDREELYAVT) lie on the Cytoplasmic side of the membrane.

Belongs to the TMEM8 family. Glycosylated. In terms of tissue distribution, expressed in pancreas, placenta, spleen, liver, kidney, bone marrow, peripheral blood leukocytes and tonsil.

The protein resides in the cell membrane. It is found in the lysosome membrane. The catalysed reaction is a 1,2-diacyl-sn-glycero-3-phosphocholine + H2O = a 1-acyl-sn-glycero-3-phosphocholine + a fatty acid + H(+). Its function is as follows. Involved in the lipid remodeling steps of GPI-anchor maturation. Lipid remodeling steps consist in the generation of 2 saturated fatty chains at the sn-2 position of GPI-anchor proteins (GPI-AP). Has phospholipase A2 activity that removes an acyl-chain at the sn-2 position of GPI-anchors during the remodeling of GPI. Required for the shedding of the GPI-AP CRIPTO, but not CFC1, at the cell surface. Shedding of CRIPTO modulates Nodal signaling by allowing soluble CRIPTO to act as a Nodal coreceptor on other cells. Also indirectly involved in the translocation of RAC1 from the cytosol to the plasma membrane by maintaining the steady state amount of CAV1-enriched plasma membrane subdomains, stabilizing RAC1 at the plasma membrane. In contrast to myomaker (TMEM8C), has no fusogenic activity. This is Post-GPI attachment to proteins factor 6 from Homo sapiens (Human).